Reading from the N-terminus, the 600-residue chain is Brain-enriched guanylate kinase-associated protein (600 aa).

The residue at position 1 (Met1) is an N-acetylmethionine. A Phosphotyrosine modification is found at Tyr137. Residues 192-222 (PGSLSSRMSDASARDLGYRDGVEKSGPRPPY) form a disordered region. Ser200 is modified (phosphoserine). A compositionally biased stretch (basic and acidic residues) spans 203–217 (SARDLGYRDGVEKSG). Residues Ser229 and Ser246 each carry the phosphoserine modification. The residue at position 249 (Thr249) is a Phosphothreonine. Position 265 is a phosphoserine (Ser265). The interval 298–317 (SSYSSFSATSEEKEHAQAGT) is disordered. Ser372 carries the post-translational modification Phosphoserine. Arg380 bears the Asymmetric dimethylarginine mark. Phosphoserine is present on residues Ser463, Ser473, Ser483, Ser485, Ser508, Ser510, and Ser514. The segment at 537 to 590 (GAGSSPEPEHGSRESLEPSSMEASPEMHPPTRLSPQQAFPRTGGSGLSRKDSLT) is disordered. Residues 543 to 552 (EPEHGSRESL) are compositionally biased toward basic and acidic residues. Phosphoserine occurs at positions 560 and 570.

Interacts with DLG4 and DLGAP1 and forms a ternary complex.

It is found in the cytoplasm. Its subcellular location is the membrane. In terms of biological role, may sustain the structure of the postsynaptic density (PSD). This Mus musculus (Mouse) protein is Brain-enriched guanylate kinase-associated protein (Begain).